The primary structure comprises 320 residues: Short-chain dehydrogenase TIC 32 B, chloroplastic (320 aa).

NADP(+) contacts are provided by residues 40 to 46 (GGTSGIG), 92 to 93 (DL), Asn119, and Thr140. Ser174 is a substrate binding site. The active-site Proton acceptor is Tyr196. The interaction with calmodulin stretch occupies residues 301-317 (DTTLADKLWDFSIKLVD).

This sequence belongs to the short-chain dehydrogenases/reductases (SDR) family. As to quaternary structure, part of the Tic complex.

It localises to the plastid. It is found in the chloroplast inner membrane. Functionally, involved in protein precursor import into chloroplasts. The protein is Short-chain dehydrogenase TIC 32 B, chloroplastic of Brassica napus (Rape).